Here is a 343-residue protein sequence, read N- to C-terminus: 3-oxopimeloyl-[acyl-carrier-protein] synthase (343 aa).

Catalysis depends on residues Cys132 and His272. Residues 273–277 form an ACP-binding region; the sequence is QANHR. Residue Asn302 is part of the active site.

The protein belongs to the thiolase-like superfamily. BioZ family.

It carries out the reaction malonyl-[ACP] + an acyl-CoA + H(+) = a 3-oxoacyl-[ACP] + CO2 + CoA. It catalyses the reaction glutaryl-CoA + malonyl-[ACP] + H(+) = 3-oxo-6-carboxyhexanoyl-[ACP] + CO2 + CoA. Its pathway is cofactor biosynthesis; biotin biosynthesis. Involved in the formation of the biotin precursor pimeloyl-ACP. Catalyzes the condensation of glutaryl-CoA, an intermediate in lysine degradation, with malonyl-ACP to produce 3-oxopimeloyl-ACP. The chain is 3-oxopimeloyl-[acyl-carrier-protein] synthase from Rhodothermus marinus (strain ATCC 43812 / DSM 4252 / R-10) (Rhodothermus obamensis).